Consider the following 231-residue polypeptide: Chromosome partition protein MukE (231 aa).

The disordered stretch occupies residues 197–231 (RDGEAMPIEGGLSLDDSENDETSDNSAEGTGDEQP).

Belongs to the MukE family. As to quaternary structure, interacts, and probably forms a ternary complex, with MukF and MukB. The complex formation is stimulated by calcium or magnesium.

The protein localises to the cytoplasm. It is found in the nucleoid. Functionally, involved in chromosome condensation, segregation and cell cycle progression. May participate in facilitating chromosome segregation by condensation DNA from both sides of a centrally located replisome during cell division. Probably acts via its interaction with MukB and MukF. This is Chromosome partition protein MukE from Photorhabdus laumondii subsp. laumondii (strain DSM 15139 / CIP 105565 / TT01) (Photorhabdus luminescens subsp. laumondii).